A 145-amino-acid chain; its full sequence is 3-dehydroquinate dehydratase (145 aa).

Tyr22 acts as the Proton acceptor in catalysis. The substrate site is built by Asn71, His77, and Asp84. Residue His97 is the Proton donor of the active site. Substrate is bound by residues 98–99 (LS) and Arg108.

It belongs to the type-II 3-dehydroquinase family. As to quaternary structure, homododecamer.

The enzyme catalyses 3-dehydroquinate = 3-dehydroshikimate + H2O. The protein operates within metabolic intermediate biosynthesis; chorismate biosynthesis; chorismate from D-erythrose 4-phosphate and phosphoenolpyruvate: step 3/7. Catalyzes a trans-dehydration via an enolate intermediate. This chain is 3-dehydroquinate dehydratase, found in Francisella tularensis subsp. mediasiatica (strain FSC147).